A 108-amino-acid polypeptide reads, in one-letter code: Transmembrane protein 265 (108 aa).

A run of 2 helical transmembrane segments spans residues 34–54 (AATS…VFAI) and 78–98 (LILA…LLLW).

This sequence belongs to the CD225/Dispanin family.

The protein localises to the membrane. This Homo sapiens (Human) protein is Transmembrane protein 265.